Reading from the N-terminus, the 357-residue chain is MSKQILILPGDGIGPEIMAEAVKVLKRIDAQHGLGFELVYDELGGAAYDKYGSPLADETLERARAADAVLLGAVGGPQWDTIDPSLRPERGLLKIRSQLGLFANLRPALLYPQLADASTLKPEVVAGLDLLILRELTGGIYFGQPRGNRTLDNGERQAYDTLPYSESEIRRIAKAGFEMARLRGKKLCSVDKANVLASSQLWRAVVEEVAKDYPDIALSHMYVDNAAMQLVRAPKQFDVIVTDNMFGDILSDQASMLTGSIGMLPSASLDANSKGMYEPCHGSAPDIAGKGIANPLATILSVAMMLRYTFAQADAADAIERAVGKVLDQGLRTADIWSEGTTKVGTVAMGDAVVAAL.

Position 76 to 89 (G76 to E89) interacts with NAD(+). The substrate site is built by R96, R106, R134, and D224. 3 residues coordinate Mg(2+): D224, D248, and D252. G282 to N294 lines the NAD(+) pocket.

It belongs to the isocitrate and isopropylmalate dehydrogenases family. LeuB type 1 subfamily. Homodimer. It depends on Mg(2+) as a cofactor. Mn(2+) is required as a cofactor.

Its subcellular location is the cytoplasm. The catalysed reaction is (2R,3S)-3-isopropylmalate + NAD(+) = 4-methyl-2-oxopentanoate + CO2 + NADH. It functions in the pathway amino-acid biosynthesis; L-leucine biosynthesis; L-leucine from 3-methyl-2-oxobutanoate: step 3/4. In terms of biological role, catalyzes the oxidation of 3-carboxy-2-hydroxy-4-methylpentanoate (3-isopropylmalate) to 3-carboxy-4-methyl-2-oxopentanoate. The product decarboxylates to 4-methyl-2 oxopentanoate. The chain is 3-isopropylmalate dehydrogenase from Xanthomonas euvesicatoria pv. vesicatoria (strain 85-10) (Xanthomonas campestris pv. vesicatoria).